A 485-amino-acid chain; its full sequence is Adenosylhomocysteinase (485 aa).

Residues T60, D146, and E208 each coordinate substrate. An NAD(+)-binding site is contributed by 209-211 (TTT). Substrate-binding residues include K238 and D242. Residues N243, 272-277 (GYGDVG), E295, N330, 351-353 (IGH), and N399 contribute to the NAD(+) site.

The protein belongs to the adenosylhomocysteinase family. Requires NAD(+) as cofactor.

Its subcellular location is the cytoplasm. It catalyses the reaction S-adenosyl-L-homocysteine + H2O = L-homocysteine + adenosine. It functions in the pathway amino-acid biosynthesis; L-homocysteine biosynthesis; L-homocysteine from S-adenosyl-L-homocysteine: step 1/1. May play a key role in the regulation of the intracellular concentration of adenosylhomocysteine. The polypeptide is Adenosylhomocysteinase (Streptomyces griseus subsp. griseus (strain JCM 4626 / CBS 651.72 / NBRC 13350 / KCC S-0626 / ISP 5235)).